The chain runs to 293 residues: Cep170-like protein (293 aa).

Disordered stretches follow at residues Pro78–Thr110 and Phe217–Glu270. The segment covering Lys227 to Leu245 has biased composition (polar residues).

This sequence belongs to the CEP170 family.

This chain is Cep170-like protein (CEP170P1), found in Homo sapiens (Human).